The sequence spans 501 residues: Lysine--tRNA ligase (501 aa).

Mg(2+) is bound by residues Glu411 and Glu418.

It belongs to the class-II aminoacyl-tRNA synthetase family. In terms of assembly, homodimer. Mg(2+) is required as a cofactor.

The protein localises to the cytoplasm. The enzyme catalyses tRNA(Lys) + L-lysine + ATP = L-lysyl-tRNA(Lys) + AMP + diphosphate. The sequence is that of Lysine--tRNA ligase from Pseudomonas aeruginosa (strain LESB58).